We begin with the raw amino-acid sequence, 520 residues long: Cilia- and flagella-associated protein 157 (520 aa).

The disordered stretch occupies residues 1–22 (MAPKKSVSKAGKELEVKKKGGK). The segment covering 10–22 (AGKELEVKKKGGK) has biased composition (basic and acidic residues). 2 coiled-coil regions span residues 33 to 189 (LAKE…LEKK) and 236 to 372 (LQMA…QATS). The disordered stretch occupies residues 416–453 (PQKAACPHQESQSHGPPKESRPSIQLPRTGSLLPQLSD). Residues 437 to 453 (PSIQLPRTGSLLPQLSD) show a composition bias toward polar residues.

The protein belongs to the CFAP157 family. In terms of assembly, interacts with TUBB and TUBA4A. Interacts with CEP350.

The protein localises to the cytoplasm. The protein resides in the cytoskeleton. It localises to the cilium basal body. Specifically required during spermatogenesis for flagellum morphogenesis and sperm motility. May be required to suppress the formation of supernumerary axonemes and ensure a correct ultrastructure. The chain is Cilia- and flagella-associated protein 157 from Homo sapiens (Human).